A 1047-amino-acid polypeptide reads, in one-letter code: Atrial natriuretic peptide receptor 2 (1047 aa).

The signal sequence occupies residues 1–22; that stretch reads MALPSLLLLVAALAGGVRPPGA. Residues 23–458 are Extracellular-facing; it reads RNLTLAVVLP…DKTPLSTLAI (436 aa). N-linked (GlcNAc...) asparagine glycans are attached at residues asparagine 24 and asparagine 35. A disulfide bond links cysteine 75 and cysteine 101. N-linked (GlcNAc...) asparagine glycans are attached at residues asparagine 161, asparagine 195, asparagine 244, asparagine 277, and asparagine 349. The helical transmembrane segment at 459–478 threads the bilayer; sequence VALGTGITFIMFGVSSFLIF. The Cytoplasmic portion of the chain corresponds to 479-1047; that stretch reads RKLMLEKELA…GERKGPPGLL (569 aa). Serine 513 bears the Phosphoserine mark. Residues 513–786 form the Protein kinase domain; sequence SRLTLSLRGS…PDFGQIKGFI (274 aa). Position 516 is a phosphothreonine (threonine 516). 4 positions are modified to phosphoserine: serine 518, serine 522, serine 523, and serine 526. At threonine 529 the chain carries Phosphothreonine. Positions 861 to 991 constitute a Guanylate cyclase domain; that stretch reads TIYFSDIVGF…DTVNTASRME (131 aa).

It belongs to the adenylyl cyclase class-4/guanylyl cyclase family. In terms of processing, phosphorylated. Phosphorylation of the protein kinase-like domain is required for full activation by CNP. Post-translationally, glycosylated.

It localises to the cell membrane. It carries out the reaction GTP = 3',5'-cyclic GMP + diphosphate. Functionally, receptor for the C-type natriuretic peptide NPPC/CNP hormone. Has guanylate cyclase activity upon binding of its ligand. May play a role in the regulation of skeletal growth. This Homo sapiens (Human) protein is Atrial natriuretic peptide receptor 2 (NPR2).